A 626-amino-acid chain; its full sequence is Serine/threonine-protein kinase PknB (626 aa).

The Cytoplasmic portion of the chain corresponds to 1–332 (MTTPSHLSDR…DRSIGSVGRW (332 aa)). The 264-residue stretch at 11–274 (YELGEILGFG…TAAEMRADLV (264 aa)) folds into the Protein kinase domain. ATP-binding positions include 17–25 (LGFGGMSEV), Lys-40, and 93–95 (EYV). The active-site Proton acceptor is the Asp-138. Residues 140–143 (KPAN) and Asp-156 contribute to the ATP site. Mg(2+) is bound by residues Asn-143 and Asp-156. 2 positions are modified to phosphoserine; by autocatalysis: Ser-166 and Ser-169. A phosphothreonine; by autocatalysis mark is found at Thr-171, Thr-173, and Thr-294. Ser-295 bears the Phosphoserine; by autocatalysis mark. Residues 299–323 (SAAGNLSGPRTDPLPRQDLDDTDRD) form a disordered region. A Phosphothreonine; by autocatalysis modification is found at Thr-309. The span at 311-323 (PLPRQDLDDTDRD) shows a compositional bias: basic and acidic residues. The chain crosses the membrane as a helical span at residues 333–353 (VAVVAVLAVLTVVVTIAINTF). The Extracellular portion of the chain corresponds to 354–626 (GGITRDVQVP…DGIITLRFGQ (273 aa)). PASTA domains are found at residues 356–422 (ITRD…NVST), 423–490 (GPEQ…IVGS), 491–557 (GPAT…QVSK), and 558–626 (GNQF…RFGQ).

The protein belongs to the protein kinase superfamily. Ser/Thr protein kinase family. As to quaternary structure, homodimer. In terms of processing, autophosphorylated. Dephosphorylated by PstP.

The protein localises to the cell membrane. It carries out the reaction L-seryl-[protein] + ATP = O-phospho-L-seryl-[protein] + ADP + H(+). The catalysed reaction is L-threonyl-[protein] + ATP = O-phospho-L-threonyl-[protein] + ADP + H(+). Functionally, protein kinase that regulates many aspects of mycobacterial physiology. Is a key component of a signal transduction pathway that regulates cell growth, cell shape and cell division via phosphorylation of target proteins. In Mycobacterium bovis (strain ATCC BAA-935 / AF2122/97), this protein is Serine/threonine-protein kinase PknB (pknB).